The following is a 399-amino-acid chain: Zinc metalloproteinase nas-25 (399 aa).

The first 20 residues, 1–20 (MQIYLGITICLVAFLTVIDC), serve as a signal peptide directing secretion. The Peptidase M12A domain maps to 41–237 (QVQRDLTYRW…DQINQYYQCY (197 aa)). Residues N52 and N61 are each glycosylated (N-linked (GlcNAc...) asparagine). Cystine bridges form between C82–C236, C106–C126, C240–C260, and C265–C274. H134 lines the Zn(2+) pocket. Residue E135 is part of the active site. Zn(2+)-binding residues include H138 and H144. Positions 232–275 (QYYQCYDSCRNAGQLANCANGGIPNPNNCQVCNCPMGYGGDLCD) constitute an EGF-like domain. N371 carries N-linked (GlcNAc...) asparagine glycosylation.

Requires Zn(2+) as cofactor. As to expression, expressed in pharyngeal muscles, pharyngeal-intestinal valve, rectal gland cells and arcade cells.

It is found in the secreted. Functionally, metalloprotease. The chain is Zinc metalloproteinase nas-25 (nas-25) from Caenorhabditis elegans.